We begin with the raw amino-acid sequence, 701 residues long: MARKTPIKHYRNIGISAHIDAGKTTTTERILLYTGVNHKIGEVHDGAATMDWMEQEKERGITITSAATTAFWSGMAKQFEPHRINIIDTPGHVDFTIEVERSMRVLDGAVMVYCAVGGVQPQSETVWRQANKYHVPRIAFVNKMDRMGANFLRVVEQIKTRLAANPVPIQLAIGSEEKFTGVIDLVKMKAIHWNEKDQGLTFEYQDVPDDMQQLAEKWRQNMIESAAEASEELMDKYLGGEELTEEEIKQGLRQRALKNEIILVTCGSAFKNKGVQAMLDAVIEYLPAPIDVEAIKGVLDDKGTPVIRHSKDEEPFSALAFKIATDPFVGNLTFFRVYSGVVNSGDTVLNSVKGQKERIGRIVQMHANKREEIKEVRAGDIAAAIGLKDATTGDTLCDLAHPVILERMEFPEPVISVALEPKTKADQEKMGIALGRLAKEDPSFRVWTDEESSQTIIAGMGELHLDILVDRMKREFNVEANVGKPQVAYRETIRKTVEQEGKFIRQSGGRGQYGHVWLRIEPLEPGGKGYEFLNEIVGGVIPKEYIPAVDKGVQEQLKNGVLAAYPVVDVRVAVFDGSYHDVDSSEIAFKVAGAMAFKEGFMKAKPVLLEPIMKIEVETPEEYMGDVIGDLNRRRGVIDGMDDTSTGKTIRAQVPLSEMFGYATDLRSQTQGRASYSMEFLQYSEAPANVSKTIIESRNTK.

The region spanning 8 to 290 is the tr-type G domain; it reads KHYRNIGISA…AVIEYLPAPI (283 aa). GTP-binding positions include 17–24, 88–92, and 142–145; these read AHIDAGKT, DTPGH, and NKMD.

This sequence belongs to the TRAFAC class translation factor GTPase superfamily. Classic translation factor GTPase family. EF-G/EF-2 subfamily.

The protein resides in the cytoplasm. In terms of biological role, catalyzes the GTP-dependent ribosomal translocation step during translation elongation. During this step, the ribosome changes from the pre-translocational (PRE) to the post-translocational (POST) state as the newly formed A-site-bound peptidyl-tRNA and P-site-bound deacylated tRNA move to the P and E sites, respectively. Catalyzes the coordinated movement of the two tRNA molecules, the mRNA and conformational changes in the ribosome. In Hamiltonella defensa subsp. Acyrthosiphon pisum (strain 5AT), this protein is Elongation factor G.